The sequence spans 285 residues: Bifunctional protein FolD (285 aa).

NADP(+)-binding positions include 165–167 (GRS) and S190.

It belongs to the tetrahydrofolate dehydrogenase/cyclohydrolase family. As to quaternary structure, homodimer.

It catalyses the reaction (6R)-5,10-methylene-5,6,7,8-tetrahydrofolate + NADP(+) = (6R)-5,10-methenyltetrahydrofolate + NADPH. The catalysed reaction is (6R)-5,10-methenyltetrahydrofolate + H2O = (6R)-10-formyltetrahydrofolate + H(+). The protein operates within one-carbon metabolism; tetrahydrofolate interconversion. Catalyzes the oxidation of 5,10-methylenetetrahydrofolate to 5,10-methenyltetrahydrofolate and then the hydrolysis of 5,10-methenyltetrahydrofolate to 10-formyltetrahydrofolate. The polypeptide is Bifunctional protein FolD (Burkholderia cenocepacia (strain HI2424)).